The chain runs to 207 residues: Putative 3-methyladenine DNA glycosylase (207 aa).

This sequence belongs to the DNA glycosylase MPG family.

The sequence is that of Putative 3-methyladenine DNA glycosylase from Burkholderia orbicola (strain MC0-3).